Reading from the N-terminus, the 280-residue chain is Ribosomal RNA small subunit methyltransferase I (280 aa).

Belongs to the methyltransferase superfamily. RsmI family.

It is found in the cytoplasm. The enzyme catalyses cytidine(1402) in 16S rRNA + S-adenosyl-L-methionine = 2'-O-methylcytidine(1402) in 16S rRNA + S-adenosyl-L-homocysteine + H(+). Functionally, catalyzes the 2'-O-methylation of the ribose of cytidine 1402 (C1402) in 16S rRNA. The chain is Ribosomal RNA small subunit methyltransferase I from Rickettsia prowazekii (strain Madrid E).